The chain runs to 339 residues: Large ribosomal subunit protein uL10 (339 aa).

Positions 307 to 339 (VEEEKKEEKVEEEKEDEEASEEEALAGLSALFG) are disordered. The span at 308 to 318 (EEEKKEEKVEE) shows a compositional bias: basic and acidic residues. Over residues 319-330 (EKEDEEASEEEA) the composition is skewed to acidic residues.

It belongs to the universal ribosomal protein uL10 family. As to quaternary structure, part of the 50S ribosomal subunit. Forms part of the ribosomal stalk which helps the ribosome interact with GTP-bound translation factors. Forms a heptameric L10(L12)2(L12)2(L12)2 complex, where L10 forms an elongated spine to which the L12 dimers bind in a sequential fashion.

In terms of biological role, forms part of the ribosomal stalk, playing a central role in the interaction of the ribosome with GTP-bound translation factors. The chain is Large ribosomal subunit protein uL10 from Pyrococcus furiosus (strain ATCC 43587 / DSM 3638 / JCM 8422 / Vc1).